The sequence spans 308 residues: Mitochondrial brown fat uncoupling protein 1 (308 aa).

The Mitochondrial intermembrane portion of the chain corresponds to 1 to 10 (MVASAEADVP). Residues 11–33 (PPTMLVKIASAGLSACLADIITF) form a helical membrane-spanning segment. Solcar repeat units follow at residues 11–103 (PPTM…VQEY), 112–202 (ATLG…LKEA), and 211–296 (DDIP…LKKE). Residues 34-74 (PLDTAKVRLQVQGERPNAPGVKYKGVLGTIATVAKTEGPLK) lie on the Mitochondrial matrix side of the membrane. K57 lines the fatty acid 16:0 pocket. Residues 75-97 (LYGGLPAGIQRQISFASLRIGLY) form a helical membrane-spanning segment. Residues 98-117 (DTVQEYFNAHRKTPATLGNK) are Mitochondrial intermembrane-facing. Residues 118–134 (ISAGLMTGCVTVFIGQP) form a helical membrane-spanning segment. Residues 135–179 (TEVAKVRMQAQSSLHWLKPRYSGTYNAYYVIVKTEGFLGLWKGTS) lie on the Mitochondrial matrix side of the membrane. Residues 180–196 (LNLTRNVIINCTELVVY) form a helical membrane-spanning segment. Residues 197–213 (DVLKEALVKNNVLADDI) lie on the Mitochondrial intermembrane side of the membrane. A helical membrane pass occupies residues 214 to 233 (PCHLLAALTAGFCTTALASP). Residues 234-267 (VDVVKTRFINSPPGYYPHVHNCALNMLQKEGLRA) lie on the Mitochondrial matrix side of the membrane. C255 is subject to Cysteine sulfenic acid (-SOH). Residues 268–290 (FFKGFVPSFLRLGSWTVIMHVTF) form a helical membrane-spanning segment. K270 contributes to the fatty acid 16:0 binding site. At 291 to 308 (EQLKKELMKSRQTVDCAT) the chain is on the mitochondrial intermembrane side.

It belongs to the mitochondrial carrier (TC 2.A.29) family. In terms of assembly, most probably functions as a monomer. Binds one purine nucleotide per monomer. However, has also been suggested to function as a homodimer or a homotetramer. Tightly associates with cardiolipin in the mitochondrion inner membrane; may stabilize and regulate its activity. Post-translationally, may undergo sulfenylation upon cold exposure. May increase the sensitivity of UCP1 thermogenic function to the activation by noradrenaline probably through structural effects. In terms of processing, may undergo ubiquitin-mediated proteasomal degradation. As to expression, brown adipose tissue.

It localises to the mitochondrion inner membrane. The catalysed reaction is H(+)(in) = H(+)(out). Its activity is regulated as follows. Has no constitutive proton transporter activity and has to be activated by long-chain fatty acids/LCFAs. Inhibited by purine nucleotides. Both purine nucleotides and LCFAs bind the cytosolic side of the transporter and directly compete to activate or inhibit it. Activated by noradrenaline and reactive oxygen species. Despite lacking canonical translational encoding for selenocysteine, a small pool of the protein has been observed to selectively incorporate selenocysteine at 'Cys-255'. Selenocysteine-modified protein is highly sensitive to redox modification and may constitute a pool of protein highly sensitive to activation by elevated levels of reactive oxygen species (ROS). In terms of biological role, mitochondrial protein responsible for thermogenic respiration, a specialized capacity of brown adipose tissue and beige fat that participates in non-shivering adaptive thermogenesis to temperature and diet variations and more generally to the regulation of energy balance. Functions as a long-chain fatty acid/LCFA and proton symporter, simultaneously transporting one LCFA and one proton through the inner mitochondrial membrane. However, LCFAs remaining associated with the transporter via their hydrophobic tails, it results in an apparent transport of protons activated by LCFAs. Thereby, dissipates the mitochondrial proton gradient and converts the energy of substrate oxydation into heat instead of ATP. Regulates the production of reactive oxygen species/ROS by mitochondria. The protein is Mitochondrial brown fat uncoupling protein 1 of Suncus murinus (Asian house shrew).